A 371-amino-acid polypeptide reads, in one-letter code: Aspartate-semialdehyde dehydrogenase (371 aa).

NADP(+)-binding positions include 9 to 12 (RGMV), 37 to 38 (TS), and Gln-73. Residue Arg-102 coordinates phosphate. Cys-135 serves as the catalytic Acyl-thioester intermediate. Gln-162 contributes to the substrate binding site. NADP(+) contacts are provided by residues 165–166 (SG) and Pro-193. Glu-241 lines the substrate pocket. Lys-244 contacts phosphate. Arg-268 contacts substrate. The Proton acceptor role is filled by His-275. Gln-351 lines the NADP(+) pocket.

This sequence belongs to the aspartate-semialdehyde dehydrogenase family. Homodimer.

The catalysed reaction is L-aspartate 4-semialdehyde + phosphate + NADP(+) = 4-phospho-L-aspartate + NADPH + H(+). Its pathway is amino-acid biosynthesis; L-lysine biosynthesis via DAP pathway; (S)-tetrahydrodipicolinate from L-aspartate: step 2/4. It functions in the pathway amino-acid biosynthesis; L-methionine biosynthesis via de novo pathway; L-homoserine from L-aspartate: step 2/3. It participates in amino-acid biosynthesis; L-threonine biosynthesis; L-threonine from L-aspartate: step 2/5. In terms of biological role, catalyzes the NADPH-dependent formation of L-aspartate-semialdehyde (L-ASA) by the reductive dephosphorylation of L-aspartyl-4-phosphate. The sequence is that of Aspartate-semialdehyde dehydrogenase from Neisseria meningitidis serogroup A / serotype 4A (strain DSM 15465 / Z2491).